Reading from the N-terminus, the 1842-residue chain is Plexin-B2 (1842 aa).

The first 19 residues, Met1–Ser19, serve as a signal peptide directing secretion. One can recognise a Sema domain in the interval Leu20–Val468. The Extracellular portion of the chain corresponds to Leu20 to Pro1201. 2 disulfide bridges follow: Cys78–Cys87 and Cys112–Cys120. 2 N-linked (GlcNAc...) asparagine glycosylation sites follow: Asn127 and Asn242. 3 disulfide bridges follow: Cys250–Cys366, Cys266–Cys313, and Cys331–Cys353. Residues Asn393 and Asn451 are each glycosylated (N-linked (GlcNAc...) asparagine). Cystine bridges form between Cys471/Cys488, Cys477/Cys520, Cys480/Cys497, Cys491/Cys503, and Cys557/Cys576. Asn798 is a glycosylation site (N-linked (GlcNAc...) asparagine). 3 consecutive IPT/TIG domains span residues Pro806–Tyr895, Pro898–Tyr982, and Pro986–Tyr1095. N-linked (GlcNAc...) asparagine glycosylation is found at Asn919, Asn1053, and Asn1072. The chain crosses the membrane as a helical span at residues Leu1202–Tyr1222. The Cytoplasmic portion of the chain corresponds to Cys1223–Leu1842. Ser1240, Ser1248, and Ser1574 each carry phosphoserine.

Belongs to the plexin family. As to quaternary structure, monomer, and heterodimer with PLXNB1. Interacts with MET, ARHGEF11 and ARHGEF12. May also interact with MST1R. As to expression, detected in macrophages from spleen and bone marrow (at protein level). Detected in granule cells in the developing cerebellum, dentate gyrus and olfactory bulb. Expressed in neurons and glia in the developing hippocampus.

Its subcellular location is the cell membrane. Cell surface receptor for SEMA4C, SEMA4D and SEMA4G that plays an important role in cell-cell signaling. Plays a role in glutamatergic synapse development and is required for SEMA4A-mediated excitatory synapse development. Binding to class 4 semaphorins promotes downstream activation of RHOA and phosphorylation of ERBB2 at 'Tyr-1248'. Also acts as a cell surface receptor for angiogenin (ANG); promoting ANG endocytosis and translocation to the cytoplasm or nucleus. Required for normal differentiation and migration of neuronal cells during brain corticogenesis and for normal embryonic brain development. Regulates the migration of cerebellar granule cells in the developing brain. Plays a role in RHOA activation and subsequent changes of the actin cytoskeleton. Plays a role in axon guidance, invasive growth and cell migration. May modulate the activity of RAC1 and CDC42. Down-regulates macrophage migration in wound-healing assays (in vitro). This chain is Plexin-B2, found in Mus musculus (Mouse).